The primary structure comprises 366 residues: MTTNSNLEALSDAGVSIWLDDLSRKRINSGNLAELISDYAVVGVTSNPTIFAKALSNAADYDEQVRELAARGASVDDAVRELTTRDIREAADIFRNIYEAGHDGRVSLEVDPRLAHDTERTVAEALDLWKAVDRPNLMVKIPATVEGLPAITRVLAEGVSVNVTLIFSVERYRDVMDAYLAGLEQAKANGHDLARIASVASFFVSRVDTEIDKRLESVEGGQELRGKAAIANARLAYAAYEEVFASDRFKALAAEGGKPQRPLWASTGVKDPSYSDTRYVDELVAPNTVNTMPEATLFASADHADVRGDQVSGKAAESQQVFDSLSAAGIDLDDVFAVLEREGVDKFEKSWEELLQTVREQLDQAK.

Catalysis depends on Lys-140, which acts as the Schiff-base intermediate with substrate.

Belongs to the transaldolase family. Type 2 subfamily.

Its subcellular location is the cytoplasm. The catalysed reaction is D-sedoheptulose 7-phosphate + D-glyceraldehyde 3-phosphate = D-erythrose 4-phosphate + beta-D-fructose 6-phosphate. It functions in the pathway carbohydrate degradation; pentose phosphate pathway; D-glyceraldehyde 3-phosphate and beta-D-fructose 6-phosphate from D-ribose 5-phosphate and D-xylulose 5-phosphate (non-oxidative stage): step 2/3. Transaldolase is important for the balance of metabolites in the pentose-phosphate pathway. This Saccharopolyspora erythraea (strain ATCC 11635 / DSM 40517 / JCM 4748 / NBRC 13426 / NCIMB 8594 / NRRL 2338) protein is Transaldolase.